We begin with the raw amino-acid sequence, 288 residues long: Polyprenyl transferase eriF (288 aa).

6 helical membrane passes run 24-44 (ASIIPGSIFAVGAMRGLTLPL), 51-71 (YIFLVTWLTPYIYFFTLLNQV), 101-121 (IAAFSVFLGVALYEPSLLPET), 145-165 (CIAMATGAWALLSASWKAISP), 215-235 (FIITFLALPAACCILSLGGIF), and 268-288 (FYTYIFCFILMLSSMDSHGLI).

This sequence belongs to the UbiA prenyltransferase family. The cofactor is Mg(2+).

Its subcellular location is the membrane. Polyprenyl transferase; part of the gene cluster that mediates the biosynthesis of erinacines, cyathane-xylosides that show unique biological activities, including leishmanicidal activity, stimulating activity for nerve growth-factor synthesis, and agonistic activity toward the kappa opioid receptor. The role of eriF within the pathway has still to be determined. The first step of the erinacines biosynthesis pathway is catalyzed by the geranylgeranyl diphosphate (GGPP) synthase eriE via conversion of farnesyl pyrophosphate and isopentyl pyrophosphate into geranylgeranyl pyrophosphate (GGPP). GGPP is then substrate of the diterpene cyclase eriG for the production of cyatha-3,12-diene. The cytochrome P450 monooxygenase eriI then hydroxylates cyatha-3,12-diene at C-14 of the seven-membered ring to produce erinacol, which is further hydroxylated at C-15 by the cytochrome P450 monooxygenase eriC to yield cyathadiol. The cytochrome P450 monooxygenase eriA then catalyzes C-11 hydroxylation in the presence of the short chain dehydrogenase/reductase (SDR) eriH, which leads to the production of cyathatriol. The acetyltransferase eriL converts cyathatriol into 11-O-acetyl-cyathatriol. The SDR eriH catalyzes further oxidation of 11-O-acetyl-cyathatriol into 1-O-acetylcyathin A3. Finally, the glycosyl transferase eriJ tranfers xylose from UDP-xylose onto C-14 of 11-O-acetyl-cyathatriol to form eracine Q. EriJ is also able to convert 11-O-acetyl-cyathatriol to eracine Q2 by using UDP-D-glucose as cosubstrate, but at a lower rate. The chain is Polyprenyl transferase eriF from Hericium erinaceus (Lion's mane mushroom).